Reading from the N-terminus, the 215-residue chain is LexA repressor (215 aa).

A DNA-binding region (H-T-H motif) is located at residues 28-48; it reads RAEIAAELGFSSPNAAEEHLR. Catalysis depends on for autocatalytic cleavage activity residues Ser133 and Lys170.

The protein belongs to the peptidase S24 family. Homodimer.

It carries out the reaction Hydrolysis of Ala-|-Gly bond in repressor LexA.. In terms of biological role, represses a number of genes involved in the response to DNA damage (SOS response), including recA and lexA. In the presence of single-stranded DNA, RecA interacts with LexA causing an autocatalytic cleavage which disrupts the DNA-binding part of LexA, leading to derepression of the SOS regulon and eventually DNA repair. The protein is LexA repressor of Burkholderia mallei (strain NCTC 10247).